Here is a 145-residue protein sequence, read N- to C-terminus: uncharacterized protein (145 aa).

Residues 37–123 (GKGTNTAKSS…MDREASYFAP (87 aa)) form a disordered region. The segment covering 38–63 (KGTNTAKSSGGNNGTNLNAKRSNTTQ) has biased composition (polar residues).

This is an uncharacterized protein from Caenorhabditis elegans.